Consider the following 581-residue polypeptide: Netrin-3 (581 aa).

The signal sequence occupies residues L1–A15. The Laminin N-terminal domain occupies A35–R261. 2 N-linked (GlcNAc...) asparagine glycosylation sites follow: N88 and N103. 15 disulfide bridges follow: C91–C124, C262–C271, C264–C281, C283–C292, C295–C315, C318–C327, C320–C345, C348–C357, C360–C378, C381–C393, C383–C400, C402–C411, C414–C428, C449–C521, and C468–C578. Laminin EGF-like domains lie at C262–A317, C318–A380, and C381–K430. N394 is a glycosylation site (N-linked (GlcNAc...) asparagine). The region spanning C449–C578 is the NTR domain. The Cell attachment site motif lies at R507–D509. N540 is a glycosylation site (N-linked (GlcNAc...) asparagine).

The protein localises to the secreted. It localises to the extracellular space. Its subcellular location is the extracellular matrix. In terms of biological role, netrins control guidance of CNS commissural axons and peripheral motor axons. The sequence is that of Netrin-3 (NTN3) from Gallus gallus (Chicken).